The following is a 312-amino-acid chain: Elongation factor Ts, mitochondrial (312 aa).

This sequence belongs to the EF-Ts family.

It localises to the mitochondrion. Associates with the EF-Tu.GDP complex and induces the exchange of GDP to GTP. It remains bound to the aminoacyl-tRNA.EF-Tu.GTP complex up to the GTP hydrolysis stage on the ribosome. This Xenopus laevis (African clawed frog) protein is Elongation factor Ts, mitochondrial (tsfm).